The sequence spans 160 residues: Lipoprotein signal peptidase (160 aa).

The next 2 helical transmembrane spans lie at 60–80 (IEWL…AFFI) and 84–104 (LPFL…AGTV). Active-site residues include Asp118 and Asp132. Residues 128–148 (FNIADSCLTVGVIGLLLLYIV) form a helical membrane-spanning segment.

The protein belongs to the peptidase A8 family.

Its subcellular location is the cell membrane. It catalyses the reaction Release of signal peptides from bacterial membrane prolipoproteins. Hydrolyzes -Xaa-Yaa-Zaa-|-(S,diacylglyceryl)Cys-, in which Xaa is hydrophobic (preferably Leu), and Yaa (Ala or Ser) and Zaa (Gly or Ala) have small, neutral side chains.. It functions in the pathway protein modification; lipoprotein biosynthesis (signal peptide cleavage). In terms of biological role, this protein specifically catalyzes the removal of signal peptides from prolipoproteins. In Dehalococcoides mccartyi (strain CBDB1), this protein is Lipoprotein signal peptidase.